The chain runs to 213 residues: Gas vesicle protein F (213 aa).

It belongs to the gas vesicle GvpF/GvpL family. As to quaternary structure, binds GvpA.

Its subcellular location is the gas vesicle. In terms of biological role, a minor component of the gas vesicle, may be involved in preventing GvpA aggregation during gas vesicle nucleation. Gas vesicles are hollow, gas filled proteinaceous nanostructures found in some microorganisms. They allow positioning of halobacteria at the optimal depth for growth in the poorly aerated, shallow brine pools of their habitat. Expression of a 9.5 kb mc-vac DNA fragment containing 2 divergently transcribed regions (gvpD-gvpE-gvpF-gvpG-gvpH-gvpI-gvpJ-gvpK-gvpL-gvpM and gvpA-gvpC-gvpN-gvpO) allows H.volcanii to produce gas vesicles. The protein is Gas vesicle protein F of Haloferax mediterranei (strain ATCC 33500 / DSM 1411 / JCM 8866 / NBRC 14739 / NCIMB 2177 / R-4) (Halobacterium mediterranei).